Consider the following 310-residue polypeptide: MKLTIATRGSKLALWQSNHIKAQLESFGYEVELKIFKTKGDKILDTPLALIGGKGLFTKELEDAMLRGEADLAVHSLKDVPTELPEGLVLGAITKREMTNDSLLSEQYETLADLPPNAVVGTTSLRRRMQLLHLRPDICIKDLRGNVDTRINKLKNGEFDAIILAYAGLKRLGILESVRYVHPIDENTMIPAMGQAALGIECRPDVVDVVKKLNDEKSAIETFIERDFIDRLQGGCQVPIGVRASLLENNDIIVKAVIGLPDGSELLKDKIFGSKENYHELGKELAESMIDNGAKELLQRAEAMAFKEHK.

Cysteine 236 carries the S-(dipyrrolylmethanemethyl)cysteine modification.

This sequence belongs to the HMBS family. Monomer. Dipyrromethane is required as a cofactor.

It catalyses the reaction 4 porphobilinogen + H2O = hydroxymethylbilane + 4 NH4(+). Its pathway is porphyrin-containing compound metabolism; protoporphyrin-IX biosynthesis; coproporphyrinogen-III from 5-aminolevulinate: step 2/4. Its function is as follows. Tetrapolymerization of the monopyrrole PBG into the hydroxymethylbilane pre-uroporphyrinogen in several discrete steps. This is Porphobilinogen deaminase from Nitratiruptor sp. (strain SB155-2).